The primary structure comprises 231 residues: Large ribosomal subunit protein uL1 (231 aa).

Belongs to the universal ribosomal protein uL1 family. Part of the 50S ribosomal subunit.

Its function is as follows. Binds directly to 23S rRNA. The L1 stalk is quite mobile in the ribosome, and is involved in E site tRNA release. Protein L1 is also a translational repressor protein, it controls the translation of the L11 operon by binding to its mRNA. This is Large ribosomal subunit protein uL1 from Halorhodospira halophila (strain DSM 244 / SL1) (Ectothiorhodospira halophila (strain DSM 244 / SL1)).